The chain runs to 862 residues: Autotaxin (862 aa).

Positions 1–27 are cleaved as a signal peptide; it reads MARQGCFGSYQVISLFTFAIGVNLCLG. Positions 28-35 are cleaved as a propeptide — removed by furin; it reads FTASRIKR. N-linked (GlcNAc...) asparagine glycosylation occurs at Asn-53. SMB domains are found at residues 54-97 and 98-142; these read TSGS…LKTA and RGWE…GESH. 10 cysteine pairs are disulfide-bonded: Cys-58–Cys-75, Cys-62–Cys-93, Cys-73–Cys-86, Cys-79–Cys-85, Cys-102–Cys-119, Cys-107–Cys-137, Cys-117–Cys-130, Cys-123–Cys-129, Cys-148–Cys-194, and Cys-156–Cys-350. The Cell attachment site motif lies at 126-128; that stretch reads RGD. The phosphodiesterase domain stretch occupies residues 144 to 501; it reads VDDDCEEIRV…PTFKYRTKVP (358 aa). 2 residues coordinate Zn(2+): Asp-171 and Thr-209. Thr-209 serves as the catalytic Nucleophile. 1-(9Z-octadecenoyl)-sn-glycero-3-phosphate is bound by residues Thr-209, Asn-230, and Asp-311. The 1-hexadecanoyl-sn-glycero-3-phosphate site is built by Thr-209, Asn-230, and Asp-311. Residues Thr-209, Asn-230, and Asp-311 each contribute to the 1-tetradecanoyl-sn-glycerol 3-phosphate site. The Zn(2+) site is built by Asp-311, His-315, Asp-358, and His-359. 5 disulfide bridges follow: Cys-366–Cys-468, Cys-413–Cys-805, Cys-566–Cys-666, Cys-568–Cys-651, and Cys-774–Cys-784. N-linked (GlcNAc...) asparagine glycosylation occurs at Asn-410. A Zn(2+)-binding site is contributed by His-474. A 1-(9Z-octadecenoyl)-sn-glycero-3-phosphate-binding site is contributed by His-474. His-474 contacts 1-hexadecanoyl-sn-glycero-3-phosphate. Position 474 (His-474) interacts with 1-tetradecanoyl-sn-glycerol 3-phosphate. N-linked (GlcNAc...) asparagine glycosylation occurs at Asn-524. Residues 597 to 862 are nuclease-like domain; the sequence is LYGRPAVLYR…TYLHTYESEI (266 aa). Ca(2+) is bound by residues Asp-739, Asn-741, Asn-743, Leu-745, and Asp-747. N-linked (GlcNAc...) asparagine glycosylation occurs at Asn-806. The tract at residues 829–850 is required for secretion; it reads IEHLTGLDFYRKTSRSYSEILT.

It belongs to the nucleotide pyrophosphatase/phosphodiesterase family. It depends on Zn(2+) as a cofactor. The cofactor is Ca(2+). In terms of processing, N-glycosylation, but not furin-cleavage, plays a critical role on secretion and on lysoPLD activity. Secretion requires simultaneous glycosylation on Asn-53 and Asn-410, while probable glycosylation of Asn-410 has a preferential role on lysoPLD activity. Not O-glycosylated. The interdomain disulfide bond between Cys-413 and Cys-805 is essential for catalytic activity. As to expression, expressed in brain and adipose tissue.

It is found in the secreted. The catalysed reaction is a 1-O-alkyl-sn-glycero-3-phosphoethanolamine + H2O = a 1-O-alkyl-sn-glycero-3-phosphate + ethanolamine + H(+). The enzyme catalyses a 1-acyl-sn-glycero-3-phosphoethanolamine + H2O = a 1-acyl-sn-glycero-3-phosphate + ethanolamine + H(+). It catalyses the reaction 1-(9Z-octadecenoyl)-sn-glycero-3-phosphoethanolamine + H2O = 1-(9Z-octadecenoyl)-sn-glycero-3-phosphate + ethanolamine + H(+). It carries out the reaction a 1-O-alkyl-sn-glycero-3-phosphocholine + H2O = a 1-O-alkyl-sn-glycero-3-phosphate + choline + H(+). The catalysed reaction is 1-O-(9Z-octadecenyl)-sn-glycero-3-phosphocholine + H2O = 1-O-(9Z-octadecenyl)-sn-glycero-3-phosphate + choline + H(+). The enzyme catalyses 1-O-hexadecyl-sn-glycero-3-phosphocholine + H2O = 1-O-hexadecyl-sn-glycero-3-phosphate + choline + H(+). It catalyses the reaction a 1-O-(1Z-alkenyl)-sn-glycero-3-phosphocholine + H2O = a 1-O-(1Z-alkenyl)-sn-glycero-3-phosphate + choline + H(+). It carries out the reaction a 1-acyl-sn-glycero-3-phosphocholine + H2O = a 1-acyl-sn-glycero-3-phosphate + choline + H(+). The catalysed reaction is 1-dodecanoyl-sn-glycero-3-phosphocholine + H2O = 1-dodecanoyl-sn-glycerol 3-phosphate + choline + H(+). The enzyme catalyses 1-(9Z-octadecenoyl)-sn-glycero-3-phosphocholine + H2O = 1-(9Z-octadecenoyl)-sn-glycero-3-phosphate + choline + H(+). It catalyses the reaction 1-tetradecanoyl-sn-glycero-3-phosphocholine + H2O = 1-tetradecanoyl-sn-glycerol 3-phosphate + choline + H(+). It carries out the reaction 1-decanoyl-sn-glycero-3-phosphocholine + H2O = 1-decanoyl-sn-glycero-3-phosphate + choline + H(+). The catalysed reaction is 1-octadecanoyl-sn-glycero-3-phosphocholine + H2O = 1-octadecanoyl-sn-glycero-3-phosphate + choline + H(+). The enzyme catalyses 1-hexadecanoyl-sn-glycero-3-phosphocholine + H2O = 1-hexadecanoyl-sn-glycero-3-phosphate + choline + H(+). It catalyses the reaction 1-hexanoyl-sn-glycero-3-phosphocholine + H2O = 1-hexanoyl-sn-glycero-3-phosphate + choline + H(+). It carries out the reaction 1-(9Z,12Z)-octadecadienoyl-sn-glycero-3-phosphocholine + H2O = 1-(9Z,12Z)-octadecadienoyl-sn-glycero-3-phosphate + choline + H(+). The catalysed reaction is sphing-4-enine-phosphocholine + H2O = sphing-4-enine 1-phosphate + choline + H(+). The enzyme catalyses 1-(5Z,8Z,11Z,14Z-eicosatetraenoyl)-sn-glycero-3-phosphocholine + H2O = 1-(5Z,8Z,11Z,14Z-eicosatetraenoyl)-sn-glycero-3-phosphate + choline + H(+). It catalyses the reaction a 2-acyl-sn-glycero-3-phosphocholine + H2O = a 2-acyl-sn-glycerol 3-phosphate + choline + H(+). It carries out the reaction a 1,2-diacyl-sn-glycero-3-phosphocholine + H2O = a 1,2-diacyl-sn-glycero-3-phosphate + choline + H(+). The catalysed reaction is 1,2-dioctanoyl-sn-glycero-3-phosphocholine + H2O = 1,2-dioctanoyl-sn-glycero-3-phosphate + choline + H(+). The enzyme catalyses 1,2-didecanoyl-sn-glycero-3-phosphocholine + H2O = 1,2-didecanoyl-sn-glycero-3-phosphate + choline + H(+). It catalyses the reaction a 1-acyl-sn-glycero-3-phospho-L-serine + H2O = a 1-acyl-sn-glycero-3-phosphate + L-serine + H(+). It carries out the reaction 1-(9Z-octadecenoyl)-sn-glycero-3-phospho-L-serine + H2O = 1-(9Z-octadecenoyl)-sn-glycero-3-phosphate + L-serine + H(+). The catalysed reaction is a 2-acyl-sn-glycero-3-phospho-L-serine + H2O = a 2-acyl-sn-glycerol 3-phosphate + L-serine + H(+). Inhibited by EDTA and EGTA. In terms of biological role, secreted lysophospholipase D that hydrolyzes lysophospholipids to produce the signaling molecule lysophosphatidic acid (LPA) in extracellular fluids. Its major substrate is lysophosphatidylcholine. Can also act on sphingosylphosphorylcholine producing sphingosine-1-phosphate, a modulator of cell motility. Can hydrolyze, in vitro, bis-pNPP, to some extent pNP-TMP, and barely ATP. Involved in several motility-related processes such as angiogenesis and neurite outgrowth. Acts as an angiogenic factor by stimulating migration of smooth muscle cells and microtubule formation. Stimulates migration of melanoma cells, probably via a pertussis toxin-sensitive G protein. May have a role in induction of parturition. Possible involvement in cell proliferation and adipose tissue development. Required for LPA production in activated platelets, cleaves the sn-1 lysophospholipids to generate sn-1 lysophosphatidic acids containing predominantly 18:2 and 20:4 fatty acids. Shows a preference for the sn-1 to the sn-2 isomer of 1-O-alkyl-sn-glycero-3-phosphocholine (lyso-PAF). This Mus musculus (Mouse) protein is Autotaxin.